The sequence spans 349 residues: Ferredoxin--NADP reductase 1 (349 aa).

7 residues coordinate FAD: Glu-36, Lys-44, Tyr-48, Ile-88, Leu-123, Asp-290, and Ser-331.

The protein belongs to the ferredoxin--NADP reductase type 2 family. Homodimer. FAD serves as cofactor.

It carries out the reaction 2 reduced [2Fe-2S]-[ferredoxin] + NADP(+) + H(+) = 2 oxidized [2Fe-2S]-[ferredoxin] + NADPH. The polypeptide is Ferredoxin--NADP reductase 1 (Bacillus mycoides (strain KBAB4) (Bacillus weihenstephanensis)).